Reading from the N-terminus, the 72-residue chain is Putative DNA-directed RNA polymerase subunit omega (72 aa).

Belongs to the RNA polymerase subunit omega family.

The protein localises to the plastid. It is found in the chloroplast. The enzyme catalyses RNA(n) + a ribonucleoside 5'-triphosphate = RNA(n+1) + diphosphate. In terms of biological role, may be involved in RNA polymerase activity. The chain is Putative DNA-directed RNA polymerase subunit omega (rpoZ) from Cyanidium caldarium (Red alga).